We begin with the raw amino-acid sequence, 175 residues long: MRDRRSSYEYEDLLACGRGELFGPGNAQLPLPPMLMFDRITEISETGGAHGKGLIRAELDVNPDLWFFACHFKGDPVMPGCLGLDALWQMLGFFLGWSGGEGPGRALGSGELKFTGQVLPHVRKVVYNVDIKRVMRSKLWLGIADGWLSADDEIIYRAQDLKVGLFKQTAAKPAA.

His-71 is a catalytic residue.

Belongs to the thioester dehydratase family. FabA subfamily. In terms of assembly, homodimer.

The protein localises to the cytoplasm. The enzyme catalyses a (3R)-hydroxyacyl-[ACP] = a (2E)-enoyl-[ACP] + H2O. It catalyses the reaction (3R)-hydroxydecanoyl-[ACP] = (2E)-decenoyl-[ACP] + H2O. It carries out the reaction (2E)-decenoyl-[ACP] = (3Z)-decenoyl-[ACP]. It functions in the pathway lipid metabolism; fatty acid biosynthesis. In terms of biological role, necessary for the introduction of cis unsaturation into fatty acids. Catalyzes the dehydration of (3R)-3-hydroxydecanoyl-ACP to E-(2)-decenoyl-ACP and then its isomerization to Z-(3)-decenoyl-ACP. Can catalyze the dehydratase reaction for beta-hydroxyacyl-ACPs with saturated chain lengths up to 16:0, being most active on intermediate chain length. This Rhodopseudomonas palustris (strain BisB5) protein is 3-hydroxydecanoyl-[acyl-carrier-protein] dehydratase.